The following is a 135-amino-acid chain: Large ribosomal subunit protein uL22 (135 aa).

It belongs to the universal ribosomal protein uL22 family. In terms of assembly, part of the 50S ribosomal subunit.

Functionally, this protein binds specifically to 23S rRNA; its binding is stimulated by other ribosomal proteins, e.g. L4, L17, and L20. It is important during the early stages of 50S assembly. It makes multiple contacts with different domains of the 23S rRNA in the assembled 50S subunit and ribosome. In terms of biological role, the globular domain of the protein is located near the polypeptide exit tunnel on the outside of the subunit, while an extended beta-hairpin is found that lines the wall of the exit tunnel in the center of the 70S ribosome. The protein is Large ribosomal subunit protein uL22 of Christiangramia forsetii (strain DSM 17595 / CGMCC 1.15422 / KT0803) (Gramella forsetii).